The chain runs to 195 residues: HTH-type transcriptional regulator BetI (195 aa).

The 61-residue stretch at 8-68 (EIRRAQLIDA…ATMRHVLRDL (61 aa)) folds into the HTH tetR-type domain. Positions 31 to 50 (TLASVAQRASISTGIVSHYF) form a DNA-binding region, H-T-H motif.

It functions in the pathway amine and polyamine biosynthesis; betaine biosynthesis via choline pathway [regulation]. Repressor involved in the biosynthesis of the osmoprotectant glycine betaine. It represses transcription of the choline transporter BetT and the genes of BetAB involved in the synthesis of glycine betaine. The protein is HTH-type transcriptional regulator BetI of Paraburkholderia xenovorans (strain LB400).